Consider the following 341-residue polypeptide: Phosphate acyltransferase (341 aa).

The protein belongs to the PlsX family. As to quaternary structure, homodimer. Probably interacts with PlsY.

It localises to the cytoplasm. It carries out the reaction a fatty acyl-[ACP] + phosphate = an acyl phosphate + holo-[ACP]. It participates in lipid metabolism; phospholipid metabolism. Its function is as follows. Catalyzes the reversible formation of acyl-phosphate (acyl-PO(4)) from acyl-[acyl-carrier-protein] (acyl-ACP). This enzyme utilizes acyl-ACP as fatty acyl donor, but not acyl-CoA. The chain is Phosphate acyltransferase from Ehrlichia ruminantium (strain Gardel).